The following is a 239-amino-acid chain: Outer membrane protein PagN (239 aa).

The N-terminal stretch at 1–22 (MKNFFAVCIIPLVVAWSATASA) is a signal peptide. Residues 23-26 (KEGI) are Periplasmic-facing. Residues 27–36 (YITGKAGTSV) form a beta stranded membrane-spanning segment. Residues 37–65 (VNVYGINSTFSQDEIVNGHATLPDRTKGV) lie on the Extracellular side of the membrane. The beta stranded transmembrane segment at 66 to 76 (FGGGVAIGYDF) threads the bilayer. Topologically, residues 77 to 81 (YDPFQ) are periplasmic. Residues 82–92 (LPVRLELDTTF) traverse the membrane as a beta stranded segment. Over 93-120 (RGETDAKGGQDIIAFGDPVHINVKNQVR) the chain is Extracellular. A beta stranded transmembrane segment spans residues 121 to 132 (MTTYMVNGYYDF). At 133 to 137 (HNSTA) the chain is on the periplasmic side. A beta stranded membrane pass occupies residues 138–148 (FTPYISAGVGL). The Extracellular segment spans residues 149–174 (AHVKLSNNTIPVGFGINETLSASKNN). A beta stranded membrane pass occupies residues 175–185 (FAWGAGIGAKY). Over 186-190 (AVTDN) the chain is Periplasmic. Residues 191–200 (IMIDASYKYI) traverse the membrane as a beta stranded segment. At 201-230 (NAGKVSISKNHYAGDEHTAYDADTKAASND) the chain is on the extracellular side. A beta stranded transmembrane segment spans residues 231–239 (FMLGITYAF).

The protein resides in the cell outer membrane. In terms of biological role, haemagglutinin that facilitates the adhesion to and invasion of epithelial mammalian cells. Utilizes heparinated proteoglycan as a receptor to successfully invade host cells. This chain is Outer membrane protein PagN (pagN), found in Salmonella typhimurium (strain LT2 / SGSC1412 / ATCC 700720).